We begin with the raw amino-acid sequence, 668 residues long: Penicillin-binding protein 3 (668 aa).

A helical membrane pass occupies residues 7 to 23 (LLVFLCVGLIGLIGCSK). Residue serine 410 is the Acyl-ester intermediate of the active site.

This sequence belongs to the transpeptidase family.

The protein localises to the cell membrane. The protein resides in the forespore inner membrane. It localises to the forespore outer membrane. Its subcellular location is the membrane raft. It carries out the reaction Preferential cleavage: (Ac)2-L-Lys-D-Ala-|-D-Ala. Also transpeptidation of peptidyl-alanyl moieties that are N-acyl substituents of D-alanine.. It functions in the pathway cell wall biogenesis; peptidoglycan biosynthesis. In terms of biological role, penicillin-binding proteins (PBPs) function in the late steps of murein biosynthesis. Probably required for both cortical and vegetative peptidoglycan synthesis. Although not usually required for cell division, in the absence of PBP 2B (pbpB) it becomes essential. Confers resistance to oxacillin and cephalexin. The chain is Penicillin-binding protein 3 from Bacillus subtilis (strain 168).